Reading from the N-terminus, the 353-residue chain is Photosystem II D2 protein (353 aa).

T2 carries the post-translational modification N-acetylthreonine. T2 carries the phosphothreonine modification. Residues 41 to 61 (CAYFALGGWFTGTTFVTSWYT) traverse the membrane as a helical segment. H118 is a chlorophyll a binding site. Residues 125–141 (GFMLRQFELARPVQLRP) traverse the membrane as a helical segment. Positions 130 and 143 each coordinate pheophytin a. Residues 153–166 (VFLSVFLIYPLGQS) form a helical membrane-spanning segment. H198 is a binding site for chlorophyll a. The helical transmembrane segment at 208–228 (AVLLCAIHGATVENTLFEDGD) threads the bilayer. Residues H215 and F262 each coordinate a plastoquinone. Position 215 (H215) interacts with Fe cation. H269 contributes to the Fe cation binding site. Residues 279 to 295 (GLWMSAIGVVGLALNLR) traverse the membrane as a helical segment.

Belongs to the reaction center PufL/M/PsbA/D family. In terms of assembly, PSII is composed of 1 copy each of membrane proteins PsbA, PsbB, PsbC, PsbD, PsbE, PsbF, PsbH, PsbI, PsbJ, PsbK, PsbL, PsbM, PsbT, PsbX, PsbY, PsbZ, Psb30/Ycf12, at least 3 peripheral proteins of the oxygen-evolving complex and a large number of cofactors. It forms dimeric complexes. Requires The D1/D2 heterodimer binds P680, chlorophylls that are the primary electron donor of PSII, and subsequent electron acceptors. It shares a non-heme iron and each subunit binds pheophytin, quinone, additional chlorophylls, carotenoids and lipids. There is also a Cl(-1) ion associated with D1 and D2, which is required for oxygen evolution. The PSII complex binds additional chlorophylls, carotenoids and specific lipids. as cofactor. In terms of processing, only phosphorylated in mesophyll cells, phosphorylation increases when cells are grown under high rather than low light regimes (70 vs 900 umol photons/m-2/s).

It is found in the plastid. The protein localises to the chloroplast thylakoid membrane. The catalysed reaction is 2 a plastoquinone + 4 hnu + 2 H2O = 2 a plastoquinol + O2. Functionally, photosystem II (PSII) is a light-driven water:plastoquinone oxidoreductase that uses light energy to abstract electrons from H(2)O, generating O(2) and a proton gradient subsequently used for ATP formation. It consists of a core antenna complex that captures photons, and an electron transfer chain that converts photonic excitation into a charge separation. The D1/D2 (PsbA/PsbD) reaction center heterodimer binds P680, the primary electron donor of PSII as well as several subsequent electron acceptors. D2 is needed for assembly of a stable PSII complex. This chain is Photosystem II D2 protein, found in Zea mays (Maize).